Consider the following 189-residue polypeptide: Ribosome maturation factor RimM (189 aa).

A PRC barrel domain is found at 96-169 (EDEFFQTDLI…TLLVEPYAAG (74 aa)). The interval 170–189 (LIADDEDERPQNEKKKPKKS) is disordered.

This sequence belongs to the RimM family. Binds ribosomal protein uS19.

The protein localises to the cytoplasm. Functionally, an accessory protein needed during the final step in the assembly of 30S ribosomal subunit, possibly for assembly of the head region. Essential for efficient processing of 16S rRNA. May be needed both before and after RbfA during the maturation of 16S rRNA. It has affinity for free ribosomal 30S subunits but not for 70S ribosomes. The chain is Ribosome maturation factor RimM from Brucella anthropi (strain ATCC 49188 / DSM 6882 / CCUG 24695 / JCM 21032 / LMG 3331 / NBRC 15819 / NCTC 12168 / Alc 37) (Ochrobactrum anthropi).